The following is a 109-amino-acid chain: uncharacterized protein (109 aa).

A helical membrane pass occupies residues 82 to 102 (SLSFLLLLFFYFNNYYFLSMT).

It localises to the membrane. This is an uncharacterized protein from Saccharomyces cerevisiae (strain ATCC 204508 / S288c) (Baker's yeast).